Consider the following 71-residue polypeptide: Protein SlyX homolog (71 aa).

The protein belongs to the SlyX family.

The polypeptide is Protein SlyX homolog (Stutzerimonas stutzeri (strain A1501) (Pseudomonas stutzeri)).